The primary structure comprises 160 residues: Cytochrome b6-f complex subunit 4 (160 aa).

3 helical membrane-spanning segments follow: residues 36 to 56, 95 to 115, and 131 to 151; these read LLYIFPVVILGSIACCGGLAV, LLGVVLMAAVPAGLIAVPFIE, and AVFLFGTFVAIWLGIGATFPI.

Belongs to the cytochrome b family. PetD subfamily. In terms of assembly, the 4 large subunits of the cytochrome b6-f complex are cytochrome b6, subunit IV (17 kDa polypeptide, petD), cytochrome f and the Rieske protein, while the 4 small subunits are petG, petL, petM and petN. The complex functions as a dimer.

It is found in the plastid. It localises to the cyanelle thylakoid membrane. In terms of biological role, component of the cytochrome b6-f complex, which mediates electron transfer between photosystem II (PSII) and photosystem I (PSI), cyclic electron flow around PSI, and state transitions. The sequence is that of Cytochrome b6-f complex subunit 4 from Cyanophora paradoxa.